Consider the following 297-residue polypeptide: MDLVRQLNDRLLFAVPKKGRLYEKSVALLNGADILFHRSHRLDIALSTSTPVALIFLPAADIPTFVGEGRCDLGITGVDQVRESGVNVELLQDLDFGRCQLQVQVPAGGPYSQPEQLIGKTIVTSFTRLAREYFARLEGVDEAAMTTRVKYVGGSVEAACALGVADAIVDLVESGETMRAAGLTPIGTVLSTSAHLICSPNPKSSLALLDTVRARIEGVLAAQHYVYCTYNAHADALPALLRITPGRRAPTISKLDDDNWYAVSSMIIRREKGRILDDLKASGAEDIMVFEISNCRV.

It belongs to the ATP phosphoribosyltransferase family.

It is found in the cytoplasm. It catalyses the reaction 1-(5-phospho-beta-D-ribosyl)-ATP + diphosphate = 5-phospho-alpha-D-ribose 1-diphosphate + ATP. Its pathway is amino-acid biosynthesis; L-histidine biosynthesis; L-histidine from 5-phospho-alpha-D-ribose 1-diphosphate: step 1/9. In terms of biological role, catalyzes the condensation of ATP and 5-phosphoribose 1-diphosphate to form N'-(5'-phosphoribosyl)-ATP (PR-ATP). Has a crucial role in the pathway because the rate of histidine biosynthesis seems to be controlled primarily by regulation of the enzymatic activity. The chain is ATP phosphoribosyltransferase (HIS1) from Eremothecium gossypii (strain ATCC 10895 / CBS 109.51 / FGSC 9923 / NRRL Y-1056) (Yeast).